The primary structure comprises 496 residues: Histidine--tRNA ligase (496 aa).

This sequence belongs to the class-II aminoacyl-tRNA synthetase family. Homodimer.

The protein resides in the cytoplasm. It carries out the reaction tRNA(His) + L-histidine + ATP = L-histidyl-tRNA(His) + AMP + diphosphate + H(+). This is Histidine--tRNA ligase from Bartonella bacilliformis (strain ATCC 35685 / KC583 / Herrer 020/F12,63).